The chain runs to 423 residues: Gamma-glutamyl phosphate reductase (423 aa).

The protein belongs to the gamma-glutamyl phosphate reductase family.

The protein localises to the cytoplasm. It catalyses the reaction L-glutamate 5-semialdehyde + phosphate + NADP(+) = L-glutamyl 5-phosphate + NADPH + H(+). The protein operates within amino-acid biosynthesis; L-proline biosynthesis; L-glutamate 5-semialdehyde from L-glutamate: step 2/2. Its function is as follows. Catalyzes the NADPH-dependent reduction of L-glutamate 5-phosphate into L-glutamate 5-semialdehyde and phosphate. The product spontaneously undergoes cyclization to form 1-pyrroline-5-carboxylate. This Paraburkholderia xenovorans (strain LB400) protein is Gamma-glutamyl phosphate reductase.